The following is a 299-amino-acid chain: Tyrosine recombinase XerC (299 aa).

The Core-binding (CB) domain maps to 1–85 (MKRQLEAYCA…AVRGLYRYLN (85 aa)). In terms of domain architecture, Tyr recombinase spans 106 to 285 (RLPKVLDTDR…DFQHLAAVYD (180 aa)). Catalysis depends on residues R146, K170, H237, R240, and H263. Residue Y272 is the O-(3'-phospho-DNA)-tyrosine intermediate of the active site.

This sequence belongs to the 'phage' integrase family. XerC subfamily. Forms a cyclic heterotetrameric complex composed of two molecules of XerC and two molecules of XerD.

The protein localises to the cytoplasm. Its function is as follows. Site-specific tyrosine recombinase, which acts by catalyzing the cutting and rejoining of the recombining DNA molecules. The XerC-XerD complex is essential to convert dimers of the bacterial chromosome into monomers to permit their segregation at cell division. It also contributes to the segregational stability of plasmids. The sequence is that of Tyrosine recombinase XerC from Pseudomonas putida (strain ATCC 47054 / DSM 6125 / CFBP 8728 / NCIMB 11950 / KT2440).